Here is a 1114-residue protein sequence, read N- to C-terminus: TBC1 domain family member 8B (1114 aa).

GRAM domains lie at 145 to 212 and 285 to 353; these read LKFE…EKTS and EQFK…DKTD. The segment covering 399–411 has biased composition (polar residues); sequence TEVAVSSDSTGPS. A disordered region spans residues 399 to 420; sequence TEVAVSSDSTGPSENFEEQPLT. One can recognise a Rab-GAP TBC domain in the interval 486 to 673; that stretch reads GIPETLRGEL…NVVDCFFYDG (188 aa). The region spanning 857-892 is the EF-hand domain; that stretch reads NRDSLALWTFRLLDENSDCLINFKEFSSAIDIMYNG. 2 disordered regions span residues 938-957 and 1032-1061; these read SKPADEKETESGRNSPEKGK and LHSPASSASTARDSGPSEGNAESSVKKDLP. The segment covering 940–957 has biased composition (basic and acidic residues); sequence PADEKETESGRNSPEKGK.

As to quaternary structure, interacts (via domain Rab-GAP TBC) with RAB11B (in GTP-bound form).

It localises to the cytoplasm. The protein resides in the cytosol. In terms of biological role, involved in vesicular recycling, probably as a RAB11B GTPase-activating protein. This chain is TBC1 domain family member 8B (Tbc1d8b), found in Mus musculus (Mouse).